The sequence spans 2785 residues: Testis-expressed protein 15 (2785 aa).

The segment covering 262–274 has biased composition (low complexity); that stretch reads SSSFPSSLSNAFS. Disordered regions lie at residues 262–331, 596–620, 661–683, 904–924, 943–1064, 2276–2458, 2470–2511, and 2571–2601; these read SSSF…PSSD, EQRD…SEKQ, NGKP…APND, TEST…GMCS, VQES…QGRI, NRQE…TNDK, DIDA…LVPD, and TQPI…GNSA. Over residues 275 to 286 the composition is skewed to basic and acidic residues; it reads DVRKQKHSEEQV. Positions 314–331 are enriched in polar residues; the sequence is TCSNDSQGHFSQESPSSD. Residues 596–611 are compositionally biased toward basic and acidic residues; that stretch reads EQRDDKNPNEAKEHNT. Composition is skewed to polar residues over residues 962-989 and 1021-1031; these read HNTH…TVMN and HASSSRGQNIA. A compositionally biased stretch (basic and acidic residues) spans 1033 to 1042; sequence KDLREHETHE. Polar residues-rich tracts occupy residues 1049-1064, 2291-2314, 2327-2338, 2353-2387, 2394-2415, 2431-2454, 2491-2502, and 2585-2601; these read SHGS…QGRI, DSSQ…NISD, EVSQGKGNTDTV, NIQT…SISA, RQSS…CTPK, ASLT…SVAE, DHTQISPSNLTA, and DAPN…GNSA.

This sequence belongs to the TEX15 family. Interacts with PIWIL4. Interacts with PIWIL2. In terms of tissue distribution, detected in testis and ovary, and at lower levels in lung and brain.

The protein resides in the cytoplasm. It localises to the nucleus. Its function is as follows. Required during spermatogenesis for normal chromosome synapsis and meiotic recombination in germ cells. Necessary for formation of DMC1 and RAD51 foci on meiotic chromosomes, suggesting a specific role in DNA double-stranded break repair. Essential executor of PIWIL4-piRNA pathway directed transposon DNA methylation and silencing in the male embryonic germ cells. PIWIL4-piRNA binds to nascent transposon transcripts and interacts with TEX15, which may in turn recruit the epigenetic silencing machinery to the transposon loci. Not required for piRNA biosynthesis. This Mus musculus (Mouse) protein is Testis-expressed protein 15.